Consider the following 198-residue polypeptide: Ribonuclease HII (198 aa).

One can recognise an RNase H type-2 domain in the interval 11–198 (NLIAGVDEVG…GPVKRVLGLV (188 aa)). 3 residues coordinate a divalent metal cation: Asp17, Glu18, and Asp109.

This sequence belongs to the RNase HII family. The cofactor is Mn(2+). Mg(2+) is required as a cofactor.

Its subcellular location is the cytoplasm. The enzyme catalyses Endonucleolytic cleavage to 5'-phosphomonoester.. Its function is as follows. Endonuclease that specifically degrades the RNA of RNA-DNA hybrids. The protein is Ribonuclease HII of Yersinia pseudotuberculosis serotype O:1b (strain IP 31758).